The chain runs to 427 residues: Dihydroorotase (427 aa).

Positions 57 and 59 each coordinate Zn(2+). Substrate is bound by residues 59 to 61 and Asn91; that span reads HLR. Asp149, His176, and His229 together coordinate Zn(2+). Asn275 provides a ligand contact to substrate. Asp302 is a binding site for Zn(2+). Asp302 is an active-site residue. Substrate is bound by residues His306 and 320-321; that span reads FG.

The protein belongs to the metallo-dependent hydrolases superfamily. DHOase family. Class I DHOase subfamily. Requires Zn(2+) as cofactor.

It carries out the reaction (S)-dihydroorotate + H2O = N-carbamoyl-L-aspartate + H(+). Its pathway is pyrimidine metabolism; UMP biosynthesis via de novo pathway; (S)-dihydroorotate from bicarbonate: step 3/3. In terms of biological role, catalyzes the reversible cyclization of carbamoyl aspartate to dihydroorotate. The sequence is that of Dihydroorotase from Shouchella clausii (strain KSM-K16) (Alkalihalobacillus clausii).